We begin with the raw amino-acid sequence, 540 residues long: UDP-N-acetylmuramyl-tripeptide synthetase (540 aa).

Ser-33 serves as a coordination point for UDP-N-acetyl-alpha-D-muramoyl-L-alanyl-D-glutamate. 114 to 120 (GTEGKSS) provides a ligand contact to ATP. Residues 158–159 (TT), Ser-185, and Arg-195 each bind UDP-N-acetyl-alpha-D-muramoyl-L-alanyl-D-glutamate. N6-carboxylysine is present on Lys-227.

The protein belongs to the MurCDEF family. MurE subfamily. In terms of processing, carboxylation is probably crucial for Mg(2+) binding and, consequently, for the gamma-phosphate positioning of ATP.

It localises to the cytoplasm. It functions in the pathway cell wall biogenesis; peptidoglycan biosynthesis. Functionally, catalyzes the addition of an amino acid to the nucleotide precursor UDP-N-acetylmuramoyl-L-alanyl-D-glutamate (UMAG) in the biosynthesis of bacterial cell-wall peptidoglycan. This is UDP-N-acetylmuramyl-tripeptide synthetase from Treponema pallidum (strain Nichols).